A 383-amino-acid chain; its full sequence is Transcription factor Y1 (383 aa).

HTH myb-type domains follow at residues 9–61 (KVGL…INYL) and 62–116 (RADV…SRQI). 2 DNA-binding regions (H-T-H motif) span residues 37 to 61 (WRSLPKNAGLLRCGKSCRLRWINYL) and 89 to 112 (WSLIASHFPGRTDNEIKNYWNSHL). The tract at residues 136 to 250 (SKLHSAEKRR…DATGPWELDP (115 aa)) is disordered. 2 stretches are compositionally biased toward low complexity: residues 155–170 (KSSSANTTTNTTSSKT) and 191–207 (ASSPPTAATTTSAASSP).

The protein resides in the nucleus. It functions in the pathway pigment biosynthesis. Functionally, transcription factor involved in regulating the biosynthetic pathway of flavan-4-ol-derived red phlobaphene and red-brown 3-deoxyanthocyanidin (3-DA) pigments. Regulates transcription of chalcone synthase, chalcone isomerase, dihydroflavonol reductase and flavonoid 3'-hydroxylase genes required for the phlobaphene and 3-DA biosynthesis. Transcription of these genes is activated in mesocotyls in response to ingress of non-pathogenic fungus C.heterostrophus. Regulates the production of 3-DA phytoalexins (luteolinidin, 5-methoxyluteolinidin, apigeninidin and 7-methoxyapigeninidin) in mesocotyls in response to C.heterostrophus and corn leaf aphid (CLA) R.maidis. Involved in resistance against anthracnose leaf blight (ALB) caused by the pathogenic C.sublineolum fungus by inducing the production of 3-DA phytoalexins. Confers resistance, also by inducing the production of 3-DA phytoalexins, against CLA R.maidis, which is an insect and a pest. This chain is Transcription factor Y1, found in Sorghum bicolor (Sorghum).